We begin with the raw amino-acid sequence, 334 residues long: Putative lysine N-acyltransferase C17G9.06c (334 aa).

Residue histidine 248 coordinates substrate. The active-site Proton acceptor is glutamate 286.

The protein belongs to the lysine N-acyltransferase mbtK family.

The protein localises to the cytoplasm. It localises to the nucleus. The polypeptide is Putative lysine N-acyltransferase C17G9.06c (Schizosaccharomyces pombe (strain 972 / ATCC 24843) (Fission yeast)).